A 275-amino-acid polypeptide reads, in one-letter code: Undecaprenyl-diphosphatase (275 aa).

The next 8 membrane-spanning stretches (helical) occupy residues 1–21, 42–62, 80–100, 107–127, 147–167, 184–204, 214–234, and 249–269; these read MDWVYAIVYGIVEGITEFLPI, VKDAFEVVIQGGAILSVLVYY, TLWTGVLVATIPAVVLGLAFG, LFKPSVVAWALIVGGVLMWLI, SLLIGVLQCLALVWPGFSRSA, TKFSFYLGVPTLGGAALLNLV, IGLLNVVLGAGVSFVVAYLAI, and FAVYRVAVGVLILVLIATGVM.

Belongs to the UppP family.

It localises to the cell membrane. The catalysed reaction is di-trans,octa-cis-undecaprenyl diphosphate + H2O = di-trans,octa-cis-undecaprenyl phosphate + phosphate + H(+). Catalyzes the dephosphorylation of undecaprenyl diphosphate (UPP). Confers resistance to bacitracin. In Deinococcus deserti (strain DSM 17065 / CIP 109153 / LMG 22923 / VCD115), this protein is Undecaprenyl-diphosphatase.